The following is a 466-amino-acid chain: Arginine biosynthesis bifunctional protein ArgJ, mitochondrial (466 aa).

Substrate contacts are provided by threonine 194, lysine 223, threonine 234, glutamate 321, asparagine 461, and threonine 466. Residue threonine 234 is the Nucleophile of the active site.

The protein belongs to the ArgJ family. Heterodimer of an alpha and a beta chain. The alpha and beta chains are autoproteolytically processed from a single precursor protein within the mitochondrion.

The protein localises to the mitochondrion matrix. It catalyses the reaction N(2)-acetyl-L-ornithine + L-glutamate = N-acetyl-L-glutamate + L-ornithine. The catalysed reaction is L-glutamate + acetyl-CoA = N-acetyl-L-glutamate + CoA + H(+). Its pathway is amino-acid biosynthesis; L-arginine biosynthesis; L-ornithine and N-acetyl-L-glutamate from L-glutamate and N(2)-acetyl-L-ornithine (cyclic): step 1/1. It participates in amino-acid biosynthesis; L-arginine biosynthesis; N(2)-acetyl-L-ornithine from L-glutamate: step 1/4. Functionally, catalyzes two activities which are involved in the cyclic version of arginine biosynthesis: the synthesis of acetylglutamate from glutamate and acetyl-CoA, and of ornithine by transacetylation between acetylornithine and glutamate. The chain is Arginine biosynthesis bifunctional protein ArgJ, mitochondrial from Aspergillus fumigatus (strain ATCC MYA-4609 / CBS 101355 / FGSC A1100 / Af293) (Neosartorya fumigata).